The chain runs to 314 residues: Ribosomal RNA small subunit methyltransferase H (314 aa).

S-adenosyl-L-methionine-binding positions include 31 to 33, Asp49, Phe76, Asp118, and Gln125; that span reads GGY.

It belongs to the methyltransferase superfamily. RsmH family.

It is found in the cytoplasm. The catalysed reaction is cytidine(1402) in 16S rRNA + S-adenosyl-L-methionine = N(4)-methylcytidine(1402) in 16S rRNA + S-adenosyl-L-homocysteine + H(+). Functionally, specifically methylates the N4 position of cytidine in position 1402 (C1402) of 16S rRNA. In Wolbachia pipientis wMel, this protein is Ribosomal RNA small subunit methyltransferase H.